A 590-amino-acid chain; its full sequence is KNR4/SMI1 homolog 2 (590 aa).

Disordered stretches follow at residues 59–97 (SSSHSLIEGGNNGSRTSLSRNGSSTTVGYRPGLRSSNTN), 216–239 (FQHQQQQQQHQKATSSADASETHG), and 407–590 (TPQR…DVAL). Positions 71-85 (GSRTSLSRNGSSTTV) are enriched in polar residues. A compositionally biased stretch (low complexity) spans 217 to 226 (QHQQQQQQHQ). Residues 430–454 (PSMSGATANTNKSQNPLINMESSSK) show a composition bias toward polar residues. 2 stretches are compositionally biased toward basic and acidic residues: residues 470–481 (PEEPVKKSEVKS) and 489–515 (EPEKETKQKDEIIEEKPEVIETPAKED). Over residues 516-528 (DKEEEEEEQEEEK) the composition is skewed to acidic residues. Basic residues predominate over residues 554-568 (TQKKNQSKKAKKQQQ). Over residues 576-590 (NDVEEVAEDLNDVAL) the composition is skewed to acidic residues.

It belongs to the KNR4/SMI1 family.

The sequence is that of KNR4/SMI1 homolog 2 from Debaryomyces hansenii (strain ATCC 36239 / CBS 767 / BCRC 21394 / JCM 1990 / NBRC 0083 / IGC 2968) (Yeast).